Consider the following 472-residue polypeptide: GTPase HflX (472 aa).

Residues 1-21 form a disordered region; it reads MDTIDTPGEQGSQSFGNSLGA. The 167-residue stretch at 230-396 folds into the Hflx-type G domain; it reads PTFALIGYTN…LMTEIIQEKS (167 aa). GTP contacts are provided by residues 236-243, 261-265, 283-286, 349-352, and 374-376; these read GYTNSGKS, FATLD, DTVG, NKVD, and SAK. S243 and T263 together coordinate Mg(2+).

Belongs to the TRAFAC class OBG-HflX-like GTPase superfamily. HflX GTPase family. As to quaternary structure, monomer. Associates with the 50S ribosomal subunit. The cofactor is Mg(2+).

The protein resides in the cytoplasm. Its function is as follows. GTPase that associates with the 50S ribosomal subunit and may have a role during protein synthesis or ribosome biogenesis. Specific for GTP. The polypeptide is GTPase HflX (Chlamydia pneumoniae (Chlamydophila pneumoniae)).